Here is a 431-residue protein sequence, read N- to C-terminus: RNA-binding motif, single-stranded-interacting protein 3 (431 aa).

The segment at 28 to 53 (YAPAPHPMAPPSPSTNSSSNSSGEQL) is disordered. The span at 31–40 (APHPMAPPSP) shows a compositional bias: pro residues. 2 consecutive RRM domains span residues 56–129 (TNLY…MAKQ) and 135–220 (TNLY…FADG). 2 disordered regions span residues 220–242 (GGQK…PREG) and 393–431 (TSPQ…QSKP). Over residues 401–411 (SSQDSSGQQQQ) the composition is skewed to low complexity.

The protein localises to the cytoplasm. Binds poly(A) and poly(U) oligoribonucleotides. This Mus musculus (Mouse) protein is RNA-binding motif, single-stranded-interacting protein 3 (Rbms3).